Reading from the N-terminus, the 289-residue chain is Pyridoxal kinase PdxY (289 aa).

Substrate contacts are provided by residues serine 9 and 44 to 45 (TQ). ATP is bound by residues aspartate 112, alanine 144, glutamate 149, and lysine 182. Aspartate 225 provides a ligand contact to substrate.

It belongs to the pyridoxine kinase family. PdxY subfamily. In terms of assembly, homodimer. It depends on Mg(2+) as a cofactor.

The enzyme catalyses pyridoxal + ATP = pyridoxal 5'-phosphate + ADP + H(+). It functions in the pathway cofactor metabolism; pyridoxal 5'-phosphate salvage; pyridoxal 5'-phosphate from pyridoxal: step 1/1. Its function is as follows. Pyridoxal kinase involved in the salvage pathway of pyridoxal 5'-phosphate (PLP). Catalyzes the phosphorylation of pyridoxal to PLP. The protein is Pyridoxal kinase PdxY of Aliivibrio fischeri (strain ATCC 700601 / ES114) (Vibrio fischeri).